We begin with the raw amino-acid sequence, 146 residues long: 3-dehydroquinate dehydratase (146 aa).

The active-site Proton acceptor is Y22. Residues N73, H79, and D86 each contribute to the substrate site. The active-site Proton donor is H99. Residues 100–101 (IS) and R110 each bind substrate.

It belongs to the type-II 3-dehydroquinase family. In terms of assembly, homododecamer.

The catalysed reaction is 3-dehydroquinate = 3-dehydroshikimate + H2O. It functions in the pathway metabolic intermediate biosynthesis; chorismate biosynthesis; chorismate from D-erythrose 4-phosphate and phosphoenolpyruvate: step 3/7. Functionally, catalyzes a trans-dehydration via an enolate intermediate. The sequence is that of 3-dehydroquinate dehydratase from Prochlorococcus marinus subsp. pastoris (strain CCMP1986 / NIES-2087 / MED4).